Reading from the N-terminus, the 122-residue chain is Large ribosomal subunit protein uL14 (122 aa).

It belongs to the universal ribosomal protein uL14 family. As to quaternary structure, part of the 50S ribosomal subunit. Forms a cluster with proteins L3 and L19. In the 70S ribosome, L14 and L19 interact and together make contacts with the 16S rRNA in bridges B5 and B8.

Functionally, binds to 23S rRNA. Forms part of two intersubunit bridges in the 70S ribosome. The chain is Large ribosomal subunit protein uL14 from Ruthia magnifica subsp. Calyptogena magnifica.